Here is an 85-residue protein sequence, read N- to C-terminus: Depressant scorpion toxin BmKIM (85 aa).

An N-terminal signal peptide occupies residues methionine 1–alanine 21. The LCN-type CS-alpha/beta domain maps to aspartate 22–glycine 82. 4 disulfides stabilise this stretch: cysteine 31/cysteine 81, cysteine 35/cysteine 56, cysteine 42/cysteine 63, and cysteine 46/cysteine 65. The residue at position 82 (glycine 82) is a Glycine amide.

Belongs to the long (4 C-C) scorpion toxin superfamily. Sodium channel inhibitor family. In terms of tissue distribution, expressed by the venom gland.

The protein localises to the secreted. Its function is as follows. Causes a slow progressive depressant flaccid paralysis, when injected into S.falculata blowfly larvae. Inhibits dose-dependently the total sodium (Nav) currents both in dorsal root ganglia neurons and in ventricular myocytes. Is toxic to mice by intravenous injection, but not by subcutaneous or intracerebroventricular injection. Produces antiarrhythmia in rat. Is then active on both mammals and insects. The chain is Depressant scorpion toxin BmKIM (KIM2) from Olivierus martensii (Manchurian scorpion).